Reading from the N-terminus, the 737-residue chain is Polyribonucleotide nucleotidyltransferase (737 aa).

Positions 489 and 495 each coordinate Mg(2+). Residues 556 to 615 (PKIDTIKIDVDKIKIVIGKGGETIDKIIAETGVKIDIDEEGNVSIYSSDQDAINRAKEII) form the KH domain. Residues 625-693 (DEVYRAKVVR…EKGRIDASMK (69 aa)) enclose the S1 motif domain. Residues 691–737 (SMKALLPRPPKPEHDEKGEKSERPHRPRHQKDYKPKKEFTETPKDSE) form a disordered region. Residues 700-737 (PKPEHDEKGEKSERPHRPRHQKDYKPKKEFTETPKDSE) show a composition bias toward basic and acidic residues.

This sequence belongs to the polyribonucleotide nucleotidyltransferase family. Requires Mg(2+) as cofactor.

The protein localises to the cytoplasm. The catalysed reaction is RNA(n+1) + phosphate = RNA(n) + a ribonucleoside 5'-diphosphate. Involved in mRNA degradation. Catalyzes the phosphorolysis of single-stranded polyribonucleotides processively in the 3'- to 5'-direction. The protein is Polyribonucleotide nucleotidyltransferase of Streptococcus pneumoniae serotype 2 (strain D39 / NCTC 7466).